Here is a 213-residue protein sequence, read N- to C-terminus: Putative 3-methyladenine DNA glycosylase (213 aa).

The protein belongs to the DNA glycosylase MPG family.

This chain is Putative 3-methyladenine DNA glycosylase, found in Corynebacterium jeikeium (strain K411).